The sequence spans 513 residues: Tigger transposable element-derived protein 4 (513 aa).

One can recognise an HTH psq-type domain in the interval 12-63 (PVTVKKKKSLSIEEKIDIINAVESGKKKAEIAAEYGIKKNSLSSIMKNKDKV). 2 DNA-binding regions (H-T-H motif) span residues 39-59 (KAEIAAEYGIKKNSLSSIMKN) and 108-139 (PMLRLKANDFAQKLGHNDFKCSNGWLDRFKSR). Positions 75–146 (KRKRLRTAFY…KSRYGLVFRA (72 aa)) constitute an HTH CENPB-type domain. Residues 174 to 375 (YHPKNVFNVK…VTPETIVKSY (202 aa)) form the DDE-1 domain. The segment covering 433–448 (TQKDDAEWAGESKQDE) has biased composition (basic and acidic residues). The interval 433 to 473 (TQKDDAEWAGESKQDETGLYTSDEEEEDSGALEVDLPSPSK) is disordered.

This sequence belongs to the tigger transposable element derived protein family.

It is found in the nucleus. This chain is Tigger transposable element-derived protein 4 (Tigd4), found in Mus musculus (Mouse).